Consider the following 391-residue polypeptide: Stearoyl-[acyl-carrier-protein] 9-desaturase 5, chloroplastic (391 aa).

The interval 1 to 20 (MAFAPSHTASPSYCGVAQGG) is disordered. The N-terminal 32 residues, 1-32 (MAFAPSHTASPSYCGVAQGGRRSNGMSPVVAM), are a transit peptide targeting the chloroplast. Fe cation-binding residues include E133, E171, H174, E224, E257, and H260.

This sequence belongs to the fatty acid desaturase type 2 family. Homodimer. Fe(2+) serves as cofactor.

Its subcellular location is the plastid. It localises to the chloroplast. The catalysed reaction is octadecanoyl-[ACP] + 2 reduced [2Fe-2S]-[ferredoxin] + O2 + 2 H(+) = (9Z)-octadecenoyl-[ACP] + 2 oxidized [2Fe-2S]-[ferredoxin] + 2 H2O. It functions in the pathway lipid metabolism; fatty acid metabolism. In terms of biological role, converts stearoyl-ACP to oleoyl-ACP by introduction of a cis double bond between carbons 9 and 10 of the acyl chain. The protein is Stearoyl-[acyl-carrier-protein] 9-desaturase 5, chloroplastic of Oryza sativa subsp. indica (Rice).